A 587-amino-acid polypeptide reads, in one-letter code: Complement component C8 beta chain (587 aa).

The first 31 residues, 1–31 (MNHKLKPTVGLGYCLLCAALCLLLLRDVAIA), serve as a signal peptide directing secretion. A propeptide spanning residues 32-44 (GSGEEPSGVREAR) is cleaved from the precursor. A TSP type-1 1 domain is found at 56–111 (DCVQSEWSSWTRCDVCRKKRYRYAKLVQPSQFGGEPCHVQGKEVEPCSPPSRYDCT). 5 disulfide bridges follow: cysteine 57-cysteine 92, cysteine 68-cysteine 102, cysteine 71-cysteine 110, cysteine 118-cysteine 129, and cysteine 123-cysteine 142. C-linked (Man) tryptophan glycosylation is found at tryptophan 62 and tryptophan 65. Residues 117-159 (LCEGFLCTYTGRCVPIDLRCNGDDDCGDWSAEKGSPKVPKACK) enclose the LDL-receptor class A domain. Residues leucine 134, asparagine 137, aspartate 139, aspartate 141, and glutamate 148 each coordinate Ca(2+). The MACPF domain occupies 154–500 (VPKACKQEAQ…EYLEESSSCR (347 aa)). Residues cysteine 158 and cysteine 196 are joined by a disulfide bond. Transmembrane regions (beta stranded) follow at residues 248–255 (TTVSIGFA), 258–265 (GVAEFGFN), 375–382 (EQIVLKVG), and 388–395 (VYVTVGLE). Cystine bridges form between cysteine 374–cysteine 399, cysteine 499–cysteine 546, cysteine 501–cysteine 517, cysteine 504–cysteine 519, and cysteine 521–cysteine 530. The 31-residue stretch at 501-531 (CAPCRNNGLAVLKGTRCECVCPSGYSGLGCE) folds into the EGF-like domain. The TSP type-1 2 domain occupies 541-587 (DGSWSCWGSWSPCRGRSKTRSRQCNNPAPSSGGIACRGLQMETTDCF). Tryptophan 547 and tryptophan 550 each carry a C-linked (Man) tryptophan glycan. The cysteines at positions 553 and 586 are disulfide-linked.

This sequence belongs to the complement C6/C7/C8/C9 family. Heterotrimer of 3 chains: alpha (C8A), beta (C8B) and gamma (C8G); the alpha and gamma chains are disulfide bonded. Component of the membrane attack complex (MAC), composed of complement C5b, C6, C7, C8A, C8B, C8G and multiple copies of the pore-forming subunit C9.

It is found in the secreted. Its subcellular location is the target cell membrane. Functionally, component of the membrane attack complex (MAC), a multiprotein complex activated by the complement cascade, which inserts into a target cell membrane and forms a pore, leading to target cell membrane rupture and cell lysis. The MAC is initiated by proteolytic cleavage of C5 into complement C5b in response to the classical, alternative, lectin and GZMK complement pathways. The complement pathways consist in a cascade of proteins that leads to phagocytosis and breakdown of pathogens and signaling that strengthens the adaptive immune system. C8B, together with C8A and C8G, inserts into the target membrane, but does not form pores by itself. During MAC assembly, associates with C5b, C6 and C7 to form the C5b8 intermediate complex that inserts into the target membrane and traverses the bilayer increasing membrane rigidity. The sequence is that of Complement component C8 beta chain (c8b) from Oncorhynchus mykiss (Rainbow trout).